A 243-amino-acid chain; its full sequence is Type III pantothenate kinase (243 aa).

6-13 (DIGNTVAK) is a binding site for ATP. Substrate contacts are provided by residues Tyr86 and 93-96 (GYDR). Asp95 (proton acceptor) is an active-site residue. Asp116 contributes to the K(+) binding site. Thr119 serves as a coordination point for ATP. Residue Thr171 coordinates substrate.

It belongs to the type III pantothenate kinase family. Homodimer. Requires NH4(+) as cofactor. The cofactor is K(+).

The protein resides in the cytoplasm. The enzyme catalyses (R)-pantothenate + ATP = (R)-4'-phosphopantothenate + ADP + H(+). It functions in the pathway cofactor biosynthesis; coenzyme A biosynthesis; CoA from (R)-pantothenate: step 1/5. Catalyzes the phosphorylation of pantothenate (Pan), the first step in CoA biosynthesis. This Bacteroides fragilis (strain YCH46) protein is Type III pantothenate kinase.